Here is a 408-residue protein sequence, read N- to C-terminus: Multidrug resistance protein MdtG (408 aa).

The next 11 membrane-spanning stretches (helical) occupy residues 16–36, 58–78, 92–112, 115–135, 146–166, 173–193, 224–244, 256–276, 290–310, 319–339, and 378–398; these read LIVAWLGCFLTGAAFSLVMPF, IVFSITFLFSAIASPFWGGLA, LGMGIVMVLMGLAQNIWQFLI, ALLGLLGGFVPNANALIATQV, TLSTGGVSGALLGPMAGGLLA, PVFFITASVLILCFFVTLFCI, LFVTTLIIQVATGSIAPILTL, VAFISGMIASVPGVAALLSAP, ILITALIFSVLLLIPMSYVQT, FLLGAADGALLPAVQTLLVYN, and AVFLVTAGVVLFNAVYSWNSL.

It belongs to the major facilitator superfamily. DHA1 family. MdtG (TC 2.A.1.2.20) subfamily.

The protein localises to the cell inner membrane. Functionally, confers resistance to fosfomycin and deoxycholate. The protein is Multidrug resistance protein MdtG of Escherichia coli O6:K15:H31 (strain 536 / UPEC).